A 471-amino-acid chain; its full sequence is 3-isopropylmalate dehydratase large subunit (471 aa).

[4Fe-4S] cluster contacts are provided by C347, C407, and C410.

Belongs to the aconitase/IPM isomerase family. LeuC type 1 subfamily. Heterodimer of LeuC and LeuD. Requires [4Fe-4S] cluster as cofactor.

The catalysed reaction is (2R,3S)-3-isopropylmalate = (2S)-2-isopropylmalate. Its pathway is amino-acid biosynthesis; L-leucine biosynthesis; L-leucine from 3-methyl-2-oxobutanoate: step 2/4. In terms of biological role, catalyzes the isomerization between 2-isopropylmalate and 3-isopropylmalate, via the formation of 2-isopropylmaleate. In Acaryochloris marina (strain MBIC 11017), this protein is 3-isopropylmalate dehydratase large subunit.